Reading from the N-terminus, the 364-residue chain is MTIYNFSAGPAVLPKPVLEKAQAEMLDYRSSGMSVLEMSHRSKEFDAIIKDAEYLLRELMAIPDHYRVLFLQGGASTQFSMIPLNLAKGKKAYYHVAGSWGKKAYTEAVKLSKTIPFEPILLASSEEETFSYVPTFDKDVIDPDAAYVHLTTNNTIEGTALYDIPDTNGVPIVADMSSNILAVRYKVNDFGMIYAGAQKNIGPAGVTVVIIRNDLLNSEPALSSMLDYKIQADAQSLYNTPPAYSIYIAKMVFEWVKSLGGLDQMEVKNREKSGLLYSFIEQSSFYQSPVKNPKDRSVANIPFTTPSKDLDEKFVKEAEAAGFKNIKGHRSVGGMRASLYNAFPVEGVIALIDFMRVFENQNSQ.

Arg-41 is a binding site for L-glutamate. Pyridoxal 5'-phosphate is bound by residues 75 to 76 (AS), Trp-100, Thr-155, Asp-175, and Gln-198. Lys-199 is subject to N6-(pyridoxal phosphate)lysine. Residue 239–240 (NT) participates in pyridoxal 5'-phosphate binding.

It belongs to the class-V pyridoxal-phosphate-dependent aminotransferase family. SerC subfamily. Homodimer. Pyridoxal 5'-phosphate serves as cofactor.

The protein localises to the cytoplasm. It carries out the reaction O-phospho-L-serine + 2-oxoglutarate = 3-phosphooxypyruvate + L-glutamate. The enzyme catalyses 4-(phosphooxy)-L-threonine + 2-oxoglutarate = (R)-3-hydroxy-2-oxo-4-phosphooxybutanoate + L-glutamate. It functions in the pathway amino-acid biosynthesis; L-serine biosynthesis; L-serine from 3-phospho-D-glycerate: step 2/3. Catalyzes the reversible conversion of 3-phosphohydroxypyruvate to phosphoserine and of 3-hydroxy-2-oxo-4-phosphonooxybutanoate to phosphohydroxythreonine. This is Phosphoserine aminotransferase from Streptococcus uberis (strain ATCC BAA-854 / 0140J).